The primary structure comprises 288 residues: DegV domain-containing protein MYPU_3590 (288 aa).

In terms of domain architecture, DegV spans 3–275 (IAIVIDSSSG…LGAIAISLVK (273 aa)). 2 residues coordinate hexadecanoate: Ser-61 and Ser-92.

May bind long-chain fatty acids, such as palmitate, and may play a role in lipid transport or fatty acid metabolism. This is DegV domain-containing protein MYPU_3590 from Mycoplasmopsis pulmonis (strain UAB CTIP) (Mycoplasma pulmonis).